Consider the following 88-residue polypeptide: Small ribosomal subunit protein bS20 (88 aa).

Residues 1 to 23 (MANSPQAKKRARQNDKARAHNAS) are disordered.

Belongs to the bacterial ribosomal protein bS20 family.

Functionally, binds directly to 16S ribosomal RNA. This chain is Small ribosomal subunit protein bS20, found in Teredinibacter turnerae (strain ATCC 39867 / T7901).